The primary structure comprises 325 residues: MKNQLLDAKVASEEQETVLRPSLLNDFIGQNQMKSNLTIFITSSIERDESLDHTLLHGPPGLGKTSIAQIIAKEKNVNLKSTAGPILSKAADLAAILTNLQKNDVLFIDEIHRLNIHVEEILYSAMEDFSLDIMIGEGPSARSVKIYLPKFTLIGATTRLGLISKPLCDRFGIHLKLNFYSCEELTQIVERGAKVLNVALDTNAAIEIANRSRGTPRIALRLLKRVRDFGIYQNINPLNQQITDYALNQLGIDKLGLDSSDHKYLRFIAENYDGGPVGIDTIAAALSEQRDTIEEMIEPYLIQIGFVQRTQRGRVITANALKHLH.

Positions 1-180 are large ATPase domain (RuvB-L); the sequence is MKNQLLDAKV…FGIHLKLNFY (180 aa). Residues leucine 19, arginine 20, glycine 61, lysine 64, threonine 65, serine 66, 127 to 129, arginine 170, tyrosine 180, and arginine 217 contribute to the ATP site; that span reads EDF. A Mg(2+)-binding site is contributed by threonine 65. The segment at 181–251 is small ATPAse domain (RuvB-S); sequence SCEELTQIVE…ITDYALNQLG (71 aa). The segment at 254 to 325 is head domain (RuvB-H); that stretch reads KLGLDSSDHK…ITANALKHLH (72 aa). DNA-binding residues include arginine 290, arginine 309, and arginine 314.

It belongs to the RuvB family. Homohexamer. Forms an RuvA(8)-RuvB(12)-Holliday junction (HJ) complex. HJ DNA is sandwiched between 2 RuvA tetramers; dsDNA enters through RuvA and exits via RuvB. An RuvB hexamer assembles on each DNA strand where it exits the tetramer. Each RuvB hexamer is contacted by two RuvA subunits (via domain III) on 2 adjacent RuvB subunits; this complex drives branch migration. In the full resolvosome a probable DNA-RuvA(4)-RuvB(12)-RuvC(2) complex forms which resolves the HJ.

The protein localises to the cytoplasm. The enzyme catalyses ATP + H2O = ADP + phosphate + H(+). In terms of biological role, the RuvA-RuvB-RuvC complex processes Holliday junction (HJ) DNA during genetic recombination and DNA repair, while the RuvA-RuvB complex plays an important role in the rescue of blocked DNA replication forks via replication fork reversal (RFR). RuvA specifically binds to HJ cruciform DNA, conferring on it an open structure. The RuvB hexamer acts as an ATP-dependent pump, pulling dsDNA into and through the RuvAB complex. RuvB forms 2 homohexamers on either side of HJ DNA bound by 1 or 2 RuvA tetramers; 4 subunits per hexamer contact DNA at a time. Coordinated motions by a converter formed by DNA-disengaged RuvB subunits stimulates ATP hydrolysis and nucleotide exchange. Immobilization of the converter enables RuvB to convert the ATP-contained energy into a lever motion, pulling 2 nucleotides of DNA out of the RuvA tetramer per ATP hydrolyzed, thus driving DNA branch migration. The RuvB motors rotate together with the DNA substrate, which together with the progressing nucleotide cycle form the mechanistic basis for DNA recombination by continuous HJ branch migration. Branch migration allows RuvC to scan DNA until it finds its consensus sequence, where it cleaves and resolves cruciform DNA. The polypeptide is Holliday junction branch migration complex subunit RuvB (Orientia tsutsugamushi (strain Boryong) (Rickettsia tsutsugamushi)).